A 148-amino-acid polypeptide reads, in one-letter code: Large ribosomal subunit protein bL9 (148 aa).

The protein belongs to the bacterial ribosomal protein bL9 family.

Functionally, binds to the 23S rRNA. This Campylobacter concisus (strain 13826) protein is Large ribosomal subunit protein bL9.